A 529-amino-acid chain; its full sequence is Bifunctional purine biosynthesis protein PurH (529 aa).

One can recognise an MGS-like domain in the interval 1 to 148; that stretch reads MQQRRPIRRA…KNHKDVAIVV (148 aa).

This sequence belongs to the PurH family.

The enzyme catalyses (6R)-10-formyltetrahydrofolate + 5-amino-1-(5-phospho-beta-D-ribosyl)imidazole-4-carboxamide = 5-formamido-1-(5-phospho-D-ribosyl)imidazole-4-carboxamide + (6S)-5,6,7,8-tetrahydrofolate. It catalyses the reaction IMP + H2O = 5-formamido-1-(5-phospho-D-ribosyl)imidazole-4-carboxamide. It functions in the pathway purine metabolism; IMP biosynthesis via de novo pathway; 5-formamido-1-(5-phospho-D-ribosyl)imidazole-4-carboxamide from 5-amino-1-(5-phospho-D-ribosyl)imidazole-4-carboxamide (10-formyl THF route): step 1/1. The protein operates within purine metabolism; IMP biosynthesis via de novo pathway; IMP from 5-formamido-1-(5-phospho-D-ribosyl)imidazole-4-carboxamide: step 1/1. The polypeptide is Bifunctional purine biosynthesis protein PurH (Pectobacterium atrosepticum (strain SCRI 1043 / ATCC BAA-672) (Erwinia carotovora subsp. atroseptica)).